Consider the following 371-residue polypeptide: Liposome tubulation protein MamY (371 aa).

Residues methionine 1–arginine 18 are Cytoplasmic-facing. The chain crosses the membrane as a helical span at residues isoleucine 19 to serine 39. Over glycine 40–glutamate 51 the chain is Lumenal. Residues isoleucine 52–leucine 72 form a helical membrane-spanning segment. Residues serine 73–alanine 371 are Cytoplasmic-facing.

Belongs to the magnetosome MamY family. Probably interacts with MamX and MamZ proteins.

The protein localises to the magnetosome membrane. May be involved in constriction of the cell inner membrane to form mature magnetosomes. Binds cardiolipin and liposomes. May function with MamX, MamZ amd Mms6 in biomineralization. The sequence is that of Liposome tubulation protein MamY from Magnetospirillum gryphiswaldense (strain DSM 6361 / JCM 21280 / NBRC 15271 / MSR-1).